Reading from the N-terminus, the 265-residue chain is Putative hydro-lyase PST_2764 (265 aa).

It belongs to the D-glutamate cyclase family.

This chain is Putative hydro-lyase PST_2764, found in Stutzerimonas stutzeri (strain A1501) (Pseudomonas stutzeri).